A 154-amino-acid polypeptide reads, in one-letter code: Myoglobin (154 aa).

The region spanning 2–148 is the Globin domain; the sequence is GLSDGEWQLV…FRNDMAAQYK (147 aa). Serine 4 carries the post-translational modification Phosphoserine. Histidine 65 contacts nitrite. Histidine 65 serves as a coordination point for O2. Threonine 68 carries the post-translational modification Phosphothreonine. Residue histidine 94 coordinates heme b.

As to quaternary structure, monomer.

It localises to the cytoplasm. Its subcellular location is the sarcoplasm. It catalyses the reaction Fe(III)-heme b-[protein] + nitric oxide + H2O = Fe(II)-heme b-[protein] + nitrite + 2 H(+). The enzyme catalyses H2O2 + AH2 = A + 2 H2O. In terms of biological role, monomeric heme protein which primary function is to store oxygen and facilitate its diffusion within muscle tissues. Reversibly binds oxygen through a pentacoordinated heme iron and enables its timely and efficient release as needed during periods of heightened demand. Depending on the oxidative conditions of tissues and cells, and in addition to its ability to bind oxygen, it also has a nitrite reductase activity whereby it regulates the production of bioactive nitric oxide. Under stress conditions, like hypoxia and anoxia, it also protects cells against reactive oxygen species thanks to its pseudoperoxidase activity. This Rangifer tarandus (Reindeer) protein is Myoglobin.